We begin with the raw amino-acid sequence, 154 residues long: Myoglobin (154 aa).

A Globin domain is found at 2-148; it reads GLSDGEWQLV…FRKDMASNYK (147 aa). Residue S4 is modified to Phosphoserine. H65 contributes to the nitrite binding site. H65 contributes to the O2 binding site. T68 carries the post-translational modification Phosphothreonine. Heme b is bound at residue H94.

It belongs to the globin family. Monomeric.

The protein localises to the cytoplasm. The protein resides in the sarcoplasm. The catalysed reaction is Fe(III)-heme b-[protein] + nitric oxide + H2O = Fe(II)-heme b-[protein] + nitrite + 2 H(+). It carries out the reaction H2O2 + AH2 = A + 2 H2O. Its function is as follows. Monomeric heme protein which primary function is to store oxygen and facilitate its diffusion within muscle tissues. Reversibly binds oxygen through a pentacoordinated heme iron and enables its timely and efficient release as needed during periods of heightened demand. Depending on the oxidative conditions of tissues and cells, and in addition to its ability to bind oxygen, it also has a nitrite reductase activity whereby it regulates the production of bioactive nitric oxide. Under stress conditions, like hypoxia and anoxia, it also protects cells against reactive oxygen species thanks to its pseudoperoxidase activity. In Hylobates agilis (Agile gibbon), this protein is Myoglobin (MB).